A 135-amino-acid chain; its full sequence is Large ribosomal subunit protein uL16 (135 aa).

Belongs to the universal ribosomal protein uL16 family. As to quaternary structure, part of the 50S ribosomal subunit.

Functionally, binds 23S rRNA and is also seen to make contacts with the A and possibly P site tRNAs. In Coprothermobacter proteolyticus (strain ATCC 35245 / DSM 5265 / OCM 4 / BT), this protein is Large ribosomal subunit protein uL16.